We begin with the raw amino-acid sequence, 161 residues long: Large ribosomal subunit protein uL16 (161 aa).

The tract at residues 140-161 is disordered; sequence LNKGNYKPAKTPVTADDSESSS.

This sequence belongs to the universal ribosomal protein uL16 family. As to quaternary structure, part of the 50S ribosomal subunit.

Its function is as follows. Binds 23S rRNA and is also seen to make contacts with the A and possibly P site tRNAs. The chain is Large ribosomal subunit protein uL16 from Prochlorococcus marinus (strain NATL1A).